We begin with the raw amino-acid sequence, 208 residues long: Uracil phosphoribosyltransferase (208 aa).

Residues Arg-78, Arg-103, and 130–138 (DPMLATGGT) each bind 5-phospho-alpha-D-ribose 1-diphosphate. Uracil contacts are provided by residues Ile-193 and 198-200 (GDA). Asp-199 serves as a coordination point for 5-phospho-alpha-D-ribose 1-diphosphate.

This sequence belongs to the UPRTase family. The cofactor is Mg(2+).

The catalysed reaction is UMP + diphosphate = 5-phospho-alpha-D-ribose 1-diphosphate + uracil. Its pathway is pyrimidine metabolism; UMP biosynthesis via salvage pathway; UMP from uracil: step 1/1. Allosterically activated by GTP. In terms of biological role, catalyzes the conversion of uracil and 5-phospho-alpha-D-ribose 1-diphosphate (PRPP) to UMP and diphosphate. This Solidesulfovibrio magneticus (strain ATCC 700980 / DSM 13731 / RS-1) (Desulfovibrio magneticus) protein is Uracil phosphoribosyltransferase.